The sequence spans 99 residues: Plastocyanin (99 aa).

Residues 1–99 (IEVLLGGGDG…AGMVGKVTVN (99 aa)) enclose the Plastocyanin-like domain. Positions 37, 84, 87, and 92 each coordinate Cu cation.

This sequence belongs to the plastocyanin family. Cu(2+) is required as a cofactor.

The protein resides in the plastid. It is found in the chloroplast thylakoid membrane. Functionally, participates in electron transfer between P700 and the cytochrome b6-f complex in photosystem I. This chain is Plastocyanin (PETE), found in Capsella bursa-pastoris (Shepherd's purse).